Reading from the N-terminus, the 350-residue chain is Protein RecA (350 aa).

An ATP-binding site is contributed by G68–T75.

Belongs to the RecA family.

The protein resides in the cytoplasm. Can catalyze the hydrolysis of ATP in the presence of single-stranded DNA, the ATP-dependent uptake of single-stranded DNA by duplex DNA, and the ATP-dependent hybridization of homologous single-stranded DNAs. It interacts with LexA causing its activation and leading to its autocatalytic cleavage. This is Protein RecA from Symbiobacterium thermophilum (strain DSM 24528 / JCM 14929 / IAM 14863 / T).